The following is a 1038-amino-acid chain: Ribosome quality control complex subunit 2 (1038 aa).

Residues 350–383 (ALRIQNQESQAQKKIDDARAENDRKIQALLDVQE) adopt a coiled-coil conformation. Disordered regions lie at residues 459–499 (LNTS…MKRK), 708–824 (KTSG…DEPG), and 877–898 (QRKK…KREK). A coiled-coil region spans residues 713–768 (EDNGDDDEEEEEEEEEEEEEEEEEEEEEEEEKEEEEKEEEQQQDEDDSNEVNGLEK). Residues 714 to 761 (DNGDDDEEEEEEEEEEEEEEEEEEEEEEEEKEEEEKEEEQQQDEDDSN) show a composition bias toward acidic residues. The span at 780 to 794 (SFEHDNLEKDIEKHC) shows a compositional bias: basic and acidic residues. Residues 795 to 805 (TISSDTDSDSG) show a composition bias toward polar residues. Ser797 carries the phosphoserine modification. A coiled-coil region spans residues 830 to 912 (IENINSNVRG…QALKFTKKEK (83 aa)). A compositionally biased stretch (basic and acidic residues) spans 877–894 (QRKKEEIMKREVREDRKN).

It belongs to the NEMF family. Component of the ribosome quality control complex (RQC), composed of the E3 ubiquitin ligase RKR1/LTN1, RQC1 and RQC2, as well as CDC48 and its ubiquitin-binding cofactors associated with the 60S ribosomal subunit. RQC2 binds to the 40S-binding surface of tRNAs.

The protein resides in the cytoplasm. Key component of the ribosome quality control complex (RQC), a ribosome-associated complex that mediates the extraction of incompletely synthesized nascent chains from stalled ribosomes as well as their ubiquitin-mediated proteasomal degradation. Thereby, frees 60S subunit ribosomes from the stalled translation complex and prevents the accumulation of nascent polypeptide chains that are potentially toxic for the cell. Within the RQC complex, RQC2 specifically binds stalled 60S ribosomal subunits by recognizing an exposed, nascent chain-conjugated tRNA moiety and promotes the recruitment of RKR1/LTN1 to stalled 60S subunits. Following binding to stalled 60S ribosomal subunits, RQC2 mediates CAT tailing by recruiting alanine- and threonine-charged tRNA to the A-site and directing the elongation of stalled nascent chains independently of mRNA or 40S subunits, leading to non-templated C-terminal Ala and Thr extensions (CAT tails). CAT tails promote the RKR1/LTN1-mediated ubiquitination of incompletely synthesized nascent polypeptides: CAT tailing facilitates RKR1/LTN1-dependent ubiquitination by exposing lysine residues that would otherwise remain buried in the ribosomal exit tunnel. Following ubiquitination, incompletely synthesized nascent polypeptides are recognized by CDC48 and degraded by the proteasome. CAT-tailed proteins tend to aggregate and sequester chaperones and can induce proteotoxic stress; their RKR1/LTN1-dependent ubiquitination and degradation is required to prevent proteotoxic stress. This Saccharomyces cerevisiae (strain ATCC 204508 / S288c) (Baker's yeast) protein is Ribosome quality control complex subunit 2.